The following is a 342-amino-acid chain: Protein pelota homolog (342 aa).

Belongs to the eukaryotic release factor 1 family. Pelota subfamily. As to quaternary structure, monomer. A divalent metal cation is required as a cofactor.

Its subcellular location is the cytoplasm. May function in recognizing stalled ribosomes, interact with stem-loop structures in stalled mRNA molecules, and effect endonucleolytic cleavage of the mRNA. May play a role in the release non-functional ribosomes and degradation of damaged mRNAs. Has endoribonuclease activity. This is Protein pelota homolog from Methanocorpusculum labreanum (strain ATCC 43576 / DSM 4855 / Z).